The chain runs to 413 residues: Adenylosuccinate synthetase (413 aa).

Residues 11-17 (GDEGKGK) and 39-41 (GHT) contribute to the GTP site. Asp12 serves as the catalytic Proton acceptor. Mg(2+)-binding residues include Asp12 and Gly39. IMP contacts are provided by residues 12–15 (DEGK), 37–40 (NAGH), Thr125, Arg139, Gln217, Thr232, and Arg296. His40 acts as the Proton donor in catalysis. 292–298 (TTTGRPR) is a substrate binding site. GTP is bound by residues Arg298, 324 to 326 (KLD), and 402 to 404 (STG).

Belongs to the adenylosuccinate synthetase family. As to quaternary structure, homodimer. The cofactor is Mg(2+).

It localises to the cytoplasm. The catalysed reaction is IMP + L-aspartate + GTP = N(6)-(1,2-dicarboxyethyl)-AMP + GDP + phosphate + 2 H(+). Its pathway is purine metabolism; AMP biosynthesis via de novo pathway; AMP from IMP: step 1/2. Its function is as follows. Plays an important role in the de novo pathway of purine nucleotide biosynthesis. Catalyzes the first committed step in the biosynthesis of AMP from IMP. This is Adenylosuccinate synthetase from Nautilia profundicola (strain ATCC BAA-1463 / DSM 18972 / AmH).